The primary structure comprises 179 residues: Replication restart protein DnaT (179 aa).

Residues 1 to 83 form a required for trimerization and to bind PriB region; that stretch reads MSSRILTSHF…FEEPAAAPVA (83 aa). The binds ssDNA stretch occupies residues 84 to 179; it reads VPMGKFAMYA…DSHIPRGFRG (96 aa). The interval 151-179 is disordered; sequence SRASNGGQPKRDVNSVSEPDSHIPRGFRG. A compositionally biased stretch (basic and acidic residues) spans 159-173; it reads PKRDVNSVSEPDSHI.

It belongs to the DnaT family. In terms of assembly, homotrimer. Interacts with PriB. Interacts with PriC. Component of the replication restart primosome. Primosome assembly occurs via a 'hand-off' mechanism. PriA binds to replication forks, subsequently PriB then DnaT bind; DnaT then displaces ssDNA to generate the helicase loading substrate.

Involved in the restart of stalled replication forks, which reloads the replicative helicase on sites other than the origin of replication. Can function in multiple replication restart pathways. Displaces ssDNA from a PriB-ssDNA complex. Probably forms a spiral filament on ssDNA. Its function is as follows. Binds single-stranded (ss)DNA. The minimal binding site is about 26 +/- 2 nucleotides (nt) per trimer. Two DNA-protein complexes are seen with 55 nt-long ssDNA. This Klebsiella pneumoniae subsp. pneumoniae (strain ATCC 700721 / MGH 78578) protein is Replication restart protein DnaT.